We begin with the raw amino-acid sequence, 343 residues long: N-acetyl-gamma-glutamyl-phosphate reductase (343 aa).

Residue Cys-152 is part of the active site.

This sequence belongs to the NAGSA dehydrogenase family. Type 1 subfamily.

The protein resides in the cytoplasm. The enzyme catalyses N-acetyl-L-glutamate 5-semialdehyde + phosphate + NADP(+) = N-acetyl-L-glutamyl 5-phosphate + NADPH + H(+). It functions in the pathway amino-acid biosynthesis; L-arginine biosynthesis; N(2)-acetyl-L-ornithine from L-glutamate: step 3/4. Catalyzes the NADPH-dependent reduction of N-acetyl-5-glutamyl phosphate to yield N-acetyl-L-glutamate 5-semialdehyde. This chain is N-acetyl-gamma-glutamyl-phosphate reductase, found in Methanopyrus kandleri (strain AV19 / DSM 6324 / JCM 9639 / NBRC 100938).